The chain runs to 398 residues: Homocysteine-responsive endoplasmic reticulum-resident ubiquitin-like domain member 2 protein (398 aa).

Residues Val11–Arg90 form the Ubiquitin-like domain. Disordered regions lie at residues Arg90 to His143 and Asn212 to Pro247. Residues Pro96 to Ser125 show a composition bias toward low complexity. Pro residues predominate over residues Asn233–Val245. Residues Phe298 to Leu318 form a helical membrane-spanning segment.

Its subcellular location is the membrane. Functionally, could be involved in the unfolded protein response (UPR) pathway. In Xenopus laevis (African clawed frog), this protein is Homocysteine-responsive endoplasmic reticulum-resident ubiquitin-like domain member 2 protein (herpud2).